The following is a 398-amino-acid chain: Tryptophan synthase beta chain (398 aa).

At Lys-89 the chain carries N6-(pyridoxal phosphate)lysine.

The protein belongs to the TrpB family. In terms of assembly, tetramer of two alpha and two beta chains. The cofactor is pyridoxal 5'-phosphate.

The catalysed reaction is (1S,2R)-1-C-(indol-3-yl)glycerol 3-phosphate + L-serine = D-glyceraldehyde 3-phosphate + L-tryptophan + H2O. Its pathway is amino-acid biosynthesis; L-tryptophan biosynthesis; L-tryptophan from chorismate: step 5/5. Its function is as follows. The beta subunit is responsible for the synthesis of L-tryptophan from indole and L-serine. The polypeptide is Tryptophan synthase beta chain (Methanopyrus kandleri (strain AV19 / DSM 6324 / JCM 9639 / NBRC 100938)).